The following is a 366-amino-acid chain: Anhydro-N-acetylmuramic acid kinase (366 aa).

12 to 19 (GTSMDGAD) contributes to the ATP binding site.

This sequence belongs to the anhydro-N-acetylmuramic acid kinase family.

It carries out the reaction 1,6-anhydro-N-acetyl-beta-muramate + ATP + H2O = N-acetyl-D-muramate 6-phosphate + ADP + H(+). The protein operates within amino-sugar metabolism; 1,6-anhydro-N-acetylmuramate degradation. Its pathway is cell wall biogenesis; peptidoglycan recycling. Its function is as follows. Catalyzes the specific phosphorylation of 1,6-anhydro-N-acetylmuramic acid (anhMurNAc) with the simultaneous cleavage of the 1,6-anhydro ring, generating MurNAc-6-P. Is required for the utilization of anhMurNAc either imported from the medium or derived from its own cell wall murein, and thus plays a role in cell wall recycling. The polypeptide is Anhydro-N-acetylmuramic acid kinase (Neisseria meningitidis serogroup C (strain 053442)).